The sequence spans 337 residues: MNDCDEVNNISYDPLYRYSQFYTLLTSIFSVFPLLYLIIFKLRVCTFNDNIKFLYIVYFTQILISVLNNCVVFAHHVVIPFLAVSKCDLLVNPVKNRIFQNIGVFGISCPMLTILGITAERLLALIFARCYENVKLHIGVFIGVFAMLCDMALVYFFFLDEKFDQPSISYFMVPDTSGYKMNWLCYSLLAINSVNLVFNYFLVKINTILKEKWRNSLSTRYQMEENIITTKFSTFISFIHVFFFSLYLIFTLIIRLLGPGFLKTQADLMSVRGVYITIPTYNLIIGIASCVILRHLQRQKVAKVYAEVTLKYSGIDGAQIHQEAILNVWKTKSSGRK.

7 helical membrane passes run 20–40, 62–82, 98–118, 138–158, 183–203, 234–254, and 273–293; these read QFYT…LIIF, ILIS…IPFL, IFQN…LGIT, IGVF…YFFF, WLCY…YFLV, TFIS…TLII, and GVYI…CVIL.

This sequence belongs to the nematode receptor-like protein srb family. Expressed in the ADL, ADF and ASH chemosensory neurons in the head and in the PHA and PHB chemosensory neurons in the tail. Low expression also observed in the egg-laying structures in the mid-body region.

The protein localises to the cell membrane. In terms of biological role, mediates recognition and avoidance of Streptomyces species by detecting dodecanoic acid secreted by the bacteria. Also mediates avoidance of decanoic acid which is not secreted by Streptomyces species but this may represent an additional important avoidance response in the environment. This is Serpentine receptor class beta-6 (srb-6) from Caenorhabditis elegans.